The following is a 205-amino-acid chain: Holliday junction branch migration complex subunit RuvA (205 aa).

A domain I region spans residues 1 to 64 (MIGRLRGIIL…EDAQLLFGFI (64 aa)). The segment at 65 to 143 (HKQERVLFRE…GLSGDLFVPQ (79 aa)) is domain II. The interval 144–156 (GAGEIPAAIDAPA) is flexible linker. Residues 157 to 205 (MPADPEGEAVAALVALGYKPQEASRMVSKVASAGSDCEMLIRDALRAAL) form a domain III region.

Belongs to the RuvA family. Homotetramer. Forms an RuvA(8)-RuvB(12)-Holliday junction (HJ) complex. HJ DNA is sandwiched between 2 RuvA tetramers; dsDNA enters through RuvA and exits via RuvB. An RuvB hexamer assembles on each DNA strand where it exits the tetramer. Each RuvB hexamer is contacted by two RuvA subunits (via domain III) on 2 adjacent RuvB subunits; this complex drives branch migration. In the full resolvosome a probable DNA-RuvA(4)-RuvB(12)-RuvC(2) complex forms which resolves the HJ.

The protein resides in the cytoplasm. Functionally, the RuvA-RuvB-RuvC complex processes Holliday junction (HJ) DNA during genetic recombination and DNA repair, while the RuvA-RuvB complex plays an important role in the rescue of blocked DNA replication forks via replication fork reversal (RFR). RuvA specifically binds to HJ cruciform DNA, conferring on it an open structure. The RuvB hexamer acts as an ATP-dependent pump, pulling dsDNA into and through the RuvAB complex. HJ branch migration allows RuvC to scan DNA until it finds its consensus sequence, where it cleaves and resolves the cruciform DNA. The sequence is that of Holliday junction branch migration complex subunit RuvA from Sodalis glossinidius (strain morsitans).